The primary structure comprises 365 residues: tRNA N6-adenosine threonylcarbamoyltransferase (365 aa).

Residues H119 and H123 each coordinate Fe cation. Substrate is bound by residues 141 to 145 (LVSGG), D174, G187, and N288. D316 lines the Fe cation pocket.

This sequence belongs to the KAE1 / TsaD family. It depends on Fe(2+) as a cofactor.

The protein resides in the cytoplasm. It catalyses the reaction L-threonylcarbamoyladenylate + adenosine(37) in tRNA = N(6)-L-threonylcarbamoyladenosine(37) in tRNA + AMP + H(+). Its function is as follows. Required for the formation of a threonylcarbamoyl group on adenosine at position 37 (t(6)A37) in tRNAs that read codons beginning with adenine. Is involved in the transfer of the threonylcarbamoyl moiety of threonylcarbamoyl-AMP (TC-AMP) to the N6 group of A37, together with TsaE and TsaB. TsaD likely plays a direct catalytic role in this reaction. This Rhizobium etli (strain CIAT 652) protein is tRNA N6-adenosine threonylcarbamoyltransferase.